We begin with the raw amino-acid sequence, 1311 residues long: DENN domain-containing protein 5B (1311 aa).

In terms of domain architecture, uDENN spans 53–270; the sequence is ATAAGENFDQ…EVPLPASGRS (218 aa). The span at 154–165 shows a compositional bias: polar residues; the sequence is QAEHNTSAQNCT. Residues 154–201 are disordered; it reads QAEHNTSAQNCTSSSSSSSSSSSSSSMDSLSSSLDDVDSPSAHGGRRT. Over residues 166 to 187 the composition is skewed to low complexity; sequence SSSSSSSSSSSSSSMDSLSSSL. Residues 289–452 form the cDENN domain; the sequence is ELPLADFPLA…AVMSLQTSVL (164 aa). Positions 454 to 619 constitute a dDENN domain; the sequence is KELKSTSLRE…DNKIMSQWEE (166 aa). The 161-residue stretch at 809–969 folds into the RUN 1 domain; it reads LEENTLIASL…DYFCFTSVFT (161 aa). Residues 854–874 form a disordered region; that stretch reads EQQLESPVSNGQERRKTESSV. A helical transmembrane segment spans residues 962–982; that stretch reads FCFTSVFTTIMIPYRAVIIPI. The 109-residue stretch at 973 to 1081 folds into the PLAT domain; the sequence is IPYRAVIIPI…DDGSLERVLI (109 aa). Residues 1155–1306 enclose the RUN 2 domain; sequence TVLLCGEGGL…FPITLETSLT (152 aa).

Belongs to the RAB6IP1 family.

Its subcellular location is the membrane. Functionally, guanine nucleotide exchange factor (GEF) which may activate the small GTPases Rab. May promote the exchange of GDP to GTP, converting inactive GDP-bound Rab proteins into their active GTP-bound form. This Danio rerio (Zebrafish) protein is DENN domain-containing protein 5B (dennd5b).